The sequence spans 372 residues: 3,5-dihydroxyphenylacetyl-CoA synthase (372 aa).

Cys160 is an active-site residue.

It belongs to the thiolase-like superfamily. Chalcone/stilbene synthases family.

It carries out the reaction 4 malonyl-CoA + 4 H(+) = (3,5-dihydroxyphenyl)acetyl-CoA + 4 CO2 + 3 CoA + H2O. Its pathway is antibiotic biosynthesis. In terms of biological role, involved in the biosynthesis of the nonproteinogenic amino acid monomer (S)-3,5-dihydroxyphenylglycine (Dpg) responsible of the production of balhimycin antibiotic. Catalyzes the Claisen condensation of four molecules of malonyl-CoA to yield 3,5-dihydroxyphenylacetyl-CoA (DPA-CoA) and three free coenzyme A (CoA). DpgA requires the presence of the dehydratases DpgB and DpgD to facilitate the aromatization of the DPA-S-DgpA or DPA-S-CoA intermediate. This is 3,5-dihydroxyphenylacetyl-CoA synthase from Amycolatopsis balhimycina.